Reading from the N-terminus, the 78-residue chain is Conotoxin Cl11.1 (78 aa).

The N-terminal stretch at 1–19 (MKLALTFLLILMILPLTTG) is a signal peptide. A propeptide spanning residues 20–33 (GKKSDNQALKRLGA) is cleaved from the precursor. 4 disulfide bridges follow: Cys-47–Cys-61, Cys-54–Cys-66, Cys-60–Cys-70, and Cys-65–Cys-77.

Belongs to the conotoxin I1 superfamily. Expressed by the venom duct.

Its subcellular location is the secreted. This chain is Conotoxin Cl11.1, found in Californiconus californicus (California cone).